Reading from the N-terminus, the 251-residue chain is tRNA (guanine-N(7)-)-methyltransferase (251 aa).

Residues Glu-69, Glu-94, Asp-121, and Asp-143 each contribute to the S-adenosyl-L-methionine site. Asp-143 is an active-site residue. Lys-147 and Asp-179 together coordinate substrate.

This sequence belongs to the class I-like SAM-binding methyltransferase superfamily. TrmB family.

It carries out the reaction guanosine(46) in tRNA + S-adenosyl-L-methionine = N(7)-methylguanosine(46) in tRNA + S-adenosyl-L-homocysteine. It participates in tRNA modification; N(7)-methylguanine-tRNA biosynthesis. Catalyzes the formation of N(7)-methylguanine at position 46 (m7G46) in tRNA. The polypeptide is tRNA (guanine-N(7)-)-methyltransferase (Rhodopseudomonas palustris (strain BisB18)).